Consider the following 669-residue polypeptide: Protein real-time (669 aa).

The 173-residue stretch at 3 to 175 folds into the PRELI/MSF1 domain; the sequence is QKFQSPVRVY…FINQLEQEGV (173 aa). Positions 284 to 460 constitute a CRAL-TRIO domain; that stretch reads EPAVVVEHFP…FLGGPCKTMI (177 aa). The region spanning 522–641 is the GOLD domain; sequence HQNLYKSVDL…QLNLFYEVLS (120 aa).

Its subcellular location is the mitochondrion. This chain is Protein real-time, found in Drosophila pseudoobscura pseudoobscura (Fruit fly).